A 231-amino-acid chain; its full sequence is Ribonuclease 3 (231 aa).

Residues 1-134 form the RNase III domain; that stretch reads MKTLEKKLAE…FLGALLLDAG (134 aa). Glu-47 lines the Mg(2+) pocket. Asp-51 is an active-site residue. Mg(2+) is bound by residues Asp-120 and Glu-123. Glu-123 is a catalytic residue. In terms of domain architecture, DRBM spans 160–229; it reads DYKTALQELL…AKNALEKLQR (70 aa).

It belongs to the ribonuclease III family. As to quaternary structure, homodimer. It depends on Mg(2+) as a cofactor.

The protein localises to the cytoplasm. The catalysed reaction is Endonucleolytic cleavage to 5'-phosphomonoester.. In terms of biological role, digests double-stranded RNA. Involved in the processing of primary rRNA transcript to yield the immediate precursors to the large and small rRNAs (23S and 16S). Also processes some mRNAs, and tRNAs when they are encoded in the rRNA operon. CRISPR (clustered regularly interspaced short palindromic repeat) is an adaptive immune system that provides protection against mobile genetic elements (viruses, transposable elements and conjugative plasmids). CRISPR clusters contain spacers, sequences complementary to antecedent mobile elements, and target invading nucleic acids. CRISPR clusters are transcribed and processed into CRISPR RNA (crRNA). In this organism endogenous ribonuclease 3 and Cas9 are required for correct coprocessing of pre-crRNA and the trans-encoded small RNA (tracrRNA). Cas9, crRNA and tracrRNA are required for cleavage of invading DNA. Complements pre-crRNA and tracrRNA coprocessing defects in an rnc deletion in S.pyogenes strain 370. This chain is Ribonuclease 3, found in Streptococcus mutans serotype c (strain ATCC 700610 / UA159).